The primary structure comprises 638 residues: Phosphomethylpyrimidine synthase (638 aa).

Residues Asn243, Met272, Tyr301, His337, 357–359 (SRG), 398–401 (DGLR), and Glu437 contribute to the substrate site. His441 contributes to the Zn(2+) binding site. Tyr464 is a binding site for substrate. Residue His505 coordinates Zn(2+). Residues Cys585, Cys588, and Cys593 each coordinate [4Fe-4S] cluster.

Belongs to the ThiC family. As to quaternary structure, homodimer. It depends on [4Fe-4S] cluster as a cofactor.

It catalyses the reaction 5-amino-1-(5-phospho-beta-D-ribosyl)imidazole + S-adenosyl-L-methionine = 4-amino-2-methyl-5-(phosphooxymethyl)pyrimidine + CO + 5'-deoxyadenosine + formate + L-methionine + 3 H(+). It functions in the pathway cofactor biosynthesis; thiamine diphosphate biosynthesis. In terms of biological role, catalyzes the synthesis of the hydroxymethylpyrimidine phosphate (HMP-P) moiety of thiamine from aminoimidazole ribotide (AIR) in a radical S-adenosyl-L-methionine (SAM)-dependent reaction. The sequence is that of Phosphomethylpyrimidine synthase from Dechloromonas aromatica (strain RCB).